A 152-amino-acid chain; its full sequence is MGRLNYSITPEGRFARAMGVELPISPKHAREICRAIRGMKVEAAERFLQDVIALKRAVPFRRYNRNVPHRHGLVGWPAGRFPQKAARAVLRVLENAIGNAEYKGLEKERLVIGYANTKKGRTFRGWMPRAMGRATPKNQETVSIEMILTEVR.

This sequence belongs to the universal ribosomal protein uL22 family. Part of the 50S ribosomal subunit.

In terms of biological role, this protein binds specifically to 23S rRNA. It makes multiple contacts with different domains of the 23S rRNA in the assembled 50S subunit and ribosome. Functionally, the globular domain of the protein is located near the polypeptide exit tunnel on the outside of the subunit, while an extended beta-hairpin is found that lines the wall of the exit tunnel in the center of the 70S ribosome. The polypeptide is Large ribosomal subunit protein uL22 (Methanothrix thermoacetophila (strain DSM 6194 / JCM 14653 / NBRC 101360 / PT) (Methanosaeta thermophila)).